We begin with the raw amino-acid sequence, 182 residues long: ATP-dependent protease subunit HslV (182 aa).

Thr-9 is an active-site residue. Na(+) is bound by residues Ala-167, Cys-170, and Thr-173.

It belongs to the peptidase T1B family. HslV subfamily. As to quaternary structure, a double ring-shaped homohexamer of HslV is capped on each side by a ring-shaped HslU homohexamer. The assembly of the HslU/HslV complex is dependent on binding of ATP.

The protein resides in the cytoplasm. It catalyses the reaction ATP-dependent cleavage of peptide bonds with broad specificity.. Allosterically activated by HslU binding. Its function is as follows. Protease subunit of a proteasome-like degradation complex believed to be a general protein degrading machinery. The sequence is that of ATP-dependent protease subunit HslV from Enterococcus faecalis (strain ATCC 700802 / V583).